Consider the following 99-residue polypeptide: MSCQQNQQQCQPPPKCPIPKYPPKCPSKCASSCPPPISSCCGSSSGGCGCCSSEGGGCCLSHHRHHRSHCHRPKSSNCYGSGSGQQSGGSGCCSGGGCC.

Residues C78 to C99 are disordered. Positions S81–C99 are enriched in gly residues.

Belongs to the LCE family. As to quaternary structure, interacts with CYSRT1; the interaction is direct. In terms of tissue distribution, skin-specific. Expression was readily detected in adult trunk skin, adult arm skin, fetal skin, penal skin, vulva, esophagus and tongue. Not expressed in the cervix, rectum, lung, colon, or placenta.

Its function is as follows. Precursors of the cornified envelope of the stratum corneum. The polypeptide is Late cornified envelope protein 4A (LCE4A) (Homo sapiens (Human)).